Reading from the N-terminus, the 916-residue chain is Translation initiation factor IF-2 (916 aa).

Over residues 151–191 (NLDEQQRLAESDRARDEAIQRKRDEEQAAKDRVEAERKAAE) the composition is skewed to basic and acidic residues. 2 disordered regions span residues 151–262 (NLDE…SHVM) and 280–328 (HLSA…ERPT). Low complexity-rich tracts occupy residues 192 to 243 (EAAA…ATPA) and 293 to 305 (RGKP…SSSS). A tr-type G domain is found at 415–584 (SRPPVVTIMG…SLQAEVLELK (170 aa)). A G1 region spans residues 424-431 (GHVDHGKT). 424-431 (GHVDHGKT) is a GTP binding site. The interval 449 to 453 (GITQH) is G2. The segment at 470-473 (DTPG) is G3. GTP contacts are provided by residues 470 to 474 (DTPGH) and 524 to 527 (NKID). The G4 stretch occupies residues 524-527 (NKID). The tract at residues 560-562 (SAK) is G5.

It belongs to the TRAFAC class translation factor GTPase superfamily. Classic translation factor GTPase family. IF-2 subfamily.

Its subcellular location is the cytoplasm. In terms of biological role, one of the essential components for the initiation of protein synthesis. Protects formylmethionyl-tRNA from spontaneous hydrolysis and promotes its binding to the 30S ribosomal subunits. Also involved in the hydrolysis of GTP during the formation of the 70S ribosomal complex. The protein is Translation initiation factor IF-2 of Xanthomonas campestris pv. campestris (strain ATCC 33913 / DSM 3586 / NCPPB 528 / LMG 568 / P 25).